Consider the following 287-residue polypeptide: Pantothenate synthetase (287 aa).

ATP is bound at residue methionine 30–histidine 37. Residue histidine 37 is the Proton donor of the active site. Residue glutamine 61 coordinates (R)-pantoate. Beta-alanine is bound at residue glutamine 61. Residue glycine 149–aspartate 152 coordinates ATP. Glutamine 155 serves as a coordination point for (R)-pantoate. ATP is bound by residues valine 178 and leucine 186–arginine 189.

It belongs to the pantothenate synthetase family. Homodimer.

It is found in the cytoplasm. The enzyme catalyses (R)-pantoate + beta-alanine + ATP = (R)-pantothenate + AMP + diphosphate + H(+). It functions in the pathway cofactor biosynthesis; (R)-pantothenate biosynthesis; (R)-pantothenate from (R)-pantoate and beta-alanine: step 1/1. Its function is as follows. Catalyzes the condensation of pantoate with beta-alanine in an ATP-dependent reaction via a pantoyl-adenylate intermediate. The protein is Pantothenate synthetase of Pseudomonas putida (strain GB-1).